A 21-amino-acid polypeptide reads, in one-letter code: Ferredoxin (21 aa).

The region spanning lysine 2–proline 21 is the 4Fe-4S ferredoxin-type domain. [4Fe-4S] cluster contacts are provided by cysteine 10, cysteine 13, and cysteine 16.

Monomer. The cofactor is [4Fe-4S] cluster.

Ferredoxins are iron-sulfur proteins that transfer electrons in a wide variety of metabolic reactions. The chain is Ferredoxin (fdxA) from Pyrococcus woesei.